The chain runs to 170 residues: Sec-independent protein translocase protein TatB (170 aa).

The chain crosses the membrane as a helical span at residues 1–21; it reads MIDFGFDKIALIGAVALIVIG. Residues 69–170 form a disordered region; sequence AARNVEQSVS…VARFRPPRPL (102 aa). A compositionally biased stretch (polar residues) spans 73–93; the sequence is VEQSVSSEVNRTSSEMNQAWE. Residues 128–137 are compositionally biased toward basic residues; the sequence is HPRKNWRLKR.

It belongs to the TatB family. In terms of assembly, the Tat system comprises two distinct complexes: a TatABC complex, containing multiple copies of TatA, TatB and TatC subunits, and a separate TatA complex, containing only TatA subunits. Substrates initially bind to the TatABC complex, which probably triggers association of the separate TatA complex to form the active translocon.

Its subcellular location is the cell inner membrane. Part of the twin-arginine translocation (Tat) system that transports large folded proteins containing a characteristic twin-arginine motif in their signal peptide across membranes. Together with TatC, TatB is part of a receptor directly interacting with Tat signal peptides. TatB may form an oligomeric binding site that transiently accommodates folded Tat precursor proteins before their translocation. The protein is Sec-independent protein translocase protein TatB of Methylibium petroleiphilum (strain ATCC BAA-1232 / LMG 22953 / PM1).